Reading from the N-terminus, the 185-residue chain is N-alpha-acetyltransferase 30 (185 aa).

One can recognise an N-acetyltransferase domain in the interval 31-179 (IEYIPYQGES…DAVRLLLPLN (149 aa)).

It belongs to the acetyltransferase family. MAK3 subfamily.

In terms of biological role, probable catalytic component of a complex displaying alpha (N-terminal) acetyltransferase activity. In Dictyostelium discoideum (Social amoeba), this protein is N-alpha-acetyltransferase 30.